A 328-amino-acid polypeptide reads, in one-letter code: MSGTTQLRPTYHGYVRDTTDALIIFEACLAGQLLHVPRRPHDRERQNVIKSGSIFVYEEHASGIKRWTDSITWSPSRIMGNYLVYRQLEKPFAPGEKKRAKGKGGKSTTQSGGISKPRQRNALPFQQGLEQGNEYPSVPSDEDRQLVGSLVDSYDFKEQGLVKKTISITYNGVPHHLISYYTVEDVKAGLLTSPADDQGLRGVVPRAELTNGQNFRAPIEESIGGAYMPGMRHSAGFPHPSAYPTLLHQPQMHQPQVHQPLAHQPQVHQPLAHQPQVHQPLAHQPQVHQQYVHQPQAHQPYMHQPQVHLNGYQPSYGDGQWWKYLGGT.

Disordered regions lie at residues Pro94–Arg120 and Gln251–His293. Composition is skewed to low complexity over residues Lys106–Lys116, Gln251–Leu261, and Ala282–His293.

It belongs to the MIT1/WOR1 family.

It is found in the nucleus. Functionally, global transcriptional regulator of transcription that impacts, but is not absolutely required for secondary metabolism and pathogenicity on maize. Regulates synthesis of multiple secondary metabolites, including fumonisins and fusarins. This Gibberella moniliformis (strain M3125 / FGSC 7600) (Maize ear and stalk rot fungus) protein is Global transcription regulator sge1.